Reading from the N-terminus, the 475-residue chain is Transcription factor EB (475 aa).

Residues 1–52 (MASRIGLRMQLMREQAQQEEQRERMQQQAVMHYMQQQQQQQQQLGGPPTPAI) are disordered. An interaction with ACSS2 region spans residues 1-166 (MASRIGLRMQ…DDVIDNIMRL (166 aa)). Positions 26–43 (QQQAVMHYMQQQQQQQQQ) are enriched in low complexity. Residues serine 108, serine 113, serine 121, and serine 137 each carry the phosphoserine modification. Positions 135–152 (GNSAPNSPMAMLHISSNP) match the Nuclear export signal motif. The residue at position 141 (serine 141) is a Phosphoserine; by MTOR. Residues 155–164 (EFDDVIDNIM) are strong transcription activation domain. At threonine 182 the chain carries Phosphothreonine. At serine 210 the chain carries Phosphoserine; by MTOR. An S-(2,3-dicarboxypropyl)cysteine modification is found at cysteine 211. The 54-residue stretch at 234-287 (QKKDNHNLIERRRRFNINDRIKELGMLIPKANDLDVRWNKGTILKASVDYIRRM) folds into the bHLH domain. A Nuclear localization signal motif is present at residues 244-247 (RRRR). Residues 297-318 (LENHSRRLEMTNKQLWLRIQEL) form a leucine-zipper region. Position 331 is a phosphoserine (serine 331). The segment at 351–429 (SEDGPGEALM…HGSPFPNLSK (79 aa)) is disordered. Over residues 380–389 (LPSAAQPQSP) the composition is skewed to low complexity. Phosphoserine occurs at positions 422, 440, 465, 466, and 468. Residues 445–468 (ASDPLFSTMSPEASKASSRRSSFS) show a composition bias toward low complexity. The tract at residues 445 to 475 (ASDPLFSTMSPEASKASSRRSSFSMEEGDVL) is disordered.

The protein belongs to the MiT/TFE family. As to quaternary structure, homodimer and heterodimer; with TFE3 or MITF. Interacts (when phosphorylated by MTOR) with YWHAZ; promoting retention in the cytosol. Interacts with Irgm1; promoting association between TFEB and PPP3CB and dephosphorylation. Interacts with small GTPases Rag (RagA/RRAGA, RagB/RRAGB, RagC/RRAGC and/or RagD/RRAGD); promoting its recruitment to lysosomal membrane in the presence of nutrients. Interacts with ACSS2. Post-translationally, phosphorylation at Ser-210 by MTOR via non-canonical mTORC1 pathway regulates its subcellular location and activity. When nutrients are present, phosphorylation by MTOR promotes association with 14-3-3/YWHA adapters and retention in the cytosol. Inhibition of mTORC1, starvation and lysosomal disruption, promotes dephosphorylation by calcineurin PPP3CB and translocation to the nucleus. Dephosphorylated by calcineurin PPP3CB in response to lysosomal Ca(2+) release. Irgm1 promotes dephosphorylation by calcineurin PPP3CB, resulting in TFEB nuclear translocation and stimulation of lysosomal biogenesis. Exported from the nucleus in a mTORC1-dependent manner in response to nutrient availability. Alkylated via a non-enzymatic covalent modification. Itaconate, an anti-inflammatory metabolite generated in response to lipopolysaccharide, alkylates Cys-211, preventing association with 14-3-3/YWHA adapters, thereby promoting nuclear translocation and activity. In terms of processing, sumoylated; does not affect dimerization with MITF. As to expression, widely expressed.

It is found in the nucleus. The protein resides in the cytoplasm. The protein localises to the cytosol. Its subcellular location is the lysosome membrane. Its function is as follows. Transcription factor that acts as a master regulator of lysosomal biogenesis, autophagy, lysosomal exocytosis, lipid catabolism, energy metabolism and immune response. Specifically recognizes and binds E-box sequences (5'-CANNTG-3'); efficient DNA-binding requires dimerization with itself or with another MiT/TFE family member such as TFE3 or MITF. Involved in the cellular response to amino acid availability by acting downstream of MTOR: in the presence of nutrients, TFEB phosphorylation by MTOR promotes its cytosolic retention and subsequent inactivation. Upon starvation or lysosomal stress, inhibition of MTOR induces TFEB dephosphorylation, resulting in nuclear localization and transcription factor activity. Specifically recognizes and binds the CLEAR-box sequence (5'-GTCACGTGAC-3') present in the regulatory region of many lysosomal genes, leading to activate their expression, thereby playing a central role in expression of lysosomal genes. Regulates lysosomal positioning in response to nutrient deprivation by promoting the expression of PIP4P1. Acts as a positive regulator of autophagy by promoting expression of genes involved in autophagy. In association with TFE3, activates the expression of CD40L in T-cells, thereby playing a role in T-cell-dependent antibody responses in activated CD4(+) T-cells and thymus-dependent humoral immunity. Specifically recognizes the gamma-E3 box, a subset of E-boxes, present in the heavy-chain immunoglobulin enhancer. Plays a role in the signal transduction processes required for normal vascularization of the placenta. Involved in the immune response to infection by the bacteria S.aureus, S.typhimurium or S.enterica. Infection promotes itaconate production, leading to alkylation, resulting in nuclear localization and transcription factor activity. Itaconate-mediated alkylation activates TFEB-dependent lysosomal biogenesis, facilitating the bacteria clearance during the antibacterial innate immune response. In association with ACSS2, promotes the expression of genes involved in lysosome biogenesis and both autophagy upon glucose deprivation. This Mus musculus (Mouse) protein is Transcription factor EB.